The following is a 557-amino-acid chain: Potassium-transporting ATPase potassium-binding subunit (557 aa).

12 helical membrane passes run 5–25 (GFLL…PLGS), 63–83 (LCAI…MLLG), 132–152 (GLTV…FALI), 170–190 (LLRI…LFFI), 253–273 (FVQM…FGEV), 283–303 (LLWA…WAEV), 329–349 (VLVS…AVIA), 356–376 (ALGG…FGGV), 379–399 (GLYG…LMIG), 416–436 (LTAL…ALAM), 484–504 (LLAL…MAIA), and 526–546 (LFVG…FIPA).

Belongs to the KdpA family. The system is composed of three essential subunits: KdpA, KdpB and KdpC.

It localises to the cell inner membrane. Part of the high-affinity ATP-driven potassium transport (or Kdp) system, which catalyzes the hydrolysis of ATP coupled with the electrogenic transport of potassium into the cytoplasm. This subunit binds the periplasmic potassium ions and delivers the ions to the membrane domain of KdpB through an intramembrane tunnel. The chain is Potassium-transporting ATPase potassium-binding subunit from Escherichia coli O81 (strain ED1a).